The chain runs to 278 residues: Potassium/proton antiporter CemA (278 aa).

The next 4 helical transmembrane spans lie at 61–81, 155–175, 203–223, and 238–258; these read ILLL…FVFG, AVKN…LMIT, IILF…EVII, and FIFL…KYWI.

Belongs to the CemA family.

Its subcellular location is the plastid. It localises to the chloroplast inner membrane. It carries out the reaction K(+)(in) + H(+)(out) = K(+)(out) + H(+)(in). Contributes to K(+)/H(+) antiport activity by supporting proton efflux to control proton extrusion and homeostasis in chloroplasts in a light-dependent manner to modulate photosynthesis. Prevents excessive induction of non-photochemical quenching (NPQ) under continuous-light conditions. Indirectly promotes efficient inorganic carbon uptake into chloroplasts. This is Potassium/proton antiporter CemA from Pyropia yezoensis (Susabi-nori).